The primary structure comprises 301 residues: Glycine--tRNA ligase alpha subunit (301 aa).

This sequence belongs to the class-II aminoacyl-tRNA synthetase family. As to quaternary structure, tetramer of two alpha and two beta subunits.

The protein localises to the cytoplasm. It carries out the reaction tRNA(Gly) + glycine + ATP = glycyl-tRNA(Gly) + AMP + diphosphate. The sequence is that of Glycine--tRNA ligase alpha subunit from Polaromonas sp. (strain JS666 / ATCC BAA-500).